Here is a 122-residue protein sequence, read N- to C-terminus: Large ribosomal subunit protein uL18 (122 aa).

The segment covering M1 to R11 has biased composition (basic and acidic residues). The tract at residues M1–I22 is disordered. Over residues D12–I22 the composition is skewed to basic residues.

The protein belongs to the universal ribosomal protein uL18 family. In terms of assembly, part of the 50S ribosomal subunit; part of the 5S rRNA/L5/L18/L25 subcomplex. Contacts the 5S and 23S rRNAs.

This is one of the proteins that bind and probably mediate the attachment of the 5S RNA into the large ribosomal subunit, where it forms part of the central protuberance. This Pelotomaculum thermopropionicum (strain DSM 13744 / JCM 10971 / SI) protein is Large ribosomal subunit protein uL18.